Reading from the N-terminus, the 282-residue chain is Pantothenate synthetase (282 aa).

30-37 serves as a coordination point for ATP; sequence MGNLHEGH. Residue histidine 37 is the Proton donor of the active site. Residue glutamine 61 coordinates (R)-pantoate. Beta-alanine is bound at residue glutamine 61. 149-152 contacts ATP; it reads GEKD. (R)-pantoate is bound at residue glutamine 155. ATP contacts are provided by residues valine 178 and 186–189; that span reads KSSR.

Belongs to the pantothenate synthetase family. Homodimer.

The protein localises to the cytoplasm. The catalysed reaction is (R)-pantoate + beta-alanine + ATP = (R)-pantothenate + AMP + diphosphate + H(+). It functions in the pathway cofactor biosynthesis; (R)-pantothenate biosynthesis; (R)-pantothenate from (R)-pantoate and beta-alanine: step 1/1. Catalyzes the condensation of pantoate with beta-alanine in an ATP-dependent reaction via a pantoyl-adenylate intermediate. The protein is Pantothenate synthetase of Marinobacter nauticus (strain ATCC 700491 / DSM 11845 / VT8) (Marinobacter aquaeolei).